A 552-amino-acid chain; its full sequence is 3-hydroxy-3-methylglutaryl-coenzyme A reductase 1 (552 aa).

Low complexity-rich tracts occupy residues 79–99 (QHNQ…QQPQ) and 112–122 (QQQQQQQQQQQ). The interval 79–138 (QHNQQQQQKQQPSQDYIQQPQNDNNINSGKEQEQQQQQQQQQQQTPDITNQPTKTNKKIP) is disordered. Over residues 123–132 (TPDITNQPTK) the composition is skewed to polar residues. The active-site Charge relay system is E237. N-linked (GlcNAc...) asparagine glycosylation is present at N288. The active-site Charge relay system is K369. Residue N375 is glycosylated (N-linked (GlcNAc...) asparagine). D445 serves as the catalytic Charge relay system. The Proton donor role is filled by H543.

Belongs to the HMG-CoA reductase family.

It is found in the endoplasmic reticulum membrane. It carries out the reaction (R)-mevalonate + 2 NADP(+) + CoA = (3S)-3-hydroxy-3-methylglutaryl-CoA + 2 NADPH + 2 H(+). Its pathway is metabolic intermediate biosynthesis; (R)-mevalonate biosynthesis; (R)-mevalonate from acetyl-CoA: step 3/3. This transmembrane glycoprotein is involved in the control of cholesterol biosynthesis. It is the rate-limiting enzyme of the sterol biosynthesis. The polypeptide is 3-hydroxy-3-methylglutaryl-coenzyme A reductase 1 (hmgA) (Dictyostelium discoideum (Social amoeba)).